We begin with the raw amino-acid sequence, 364 residues long: MPSPHSLQTLAKKILATQQISTDHYFILKYCGLWWHGAPIMLSTNEDNQLMIKSASFKEGLSLDLALMKVVQENNHDLIKLFTEWGADINSSFVTVNMECTRNLCRELGAKEALNERDILQIFYKTRDIKTSSHVILCHELLSNNPLFQNIERMRSIIYRSLEKLSINFILDDISFSEMLTRHWYGLAILYNLTEAIQYFYEKYKHFKNWRLICGLSFNNLSDLYEIYNLEKVDMNIDEMMYLACSIYDGNYSTIYYCFVLGADINQAMLTSVINHCIGNLFLCIDLGADAFEDSMELAKQKNDNIFISILSFKNYSPDSSLLSLKMTDPEKINALLDEEKYESKNMLMFDAHDEKTSTSPVRL.

Belongs to the asfivirus MGF 360 family.

In terms of biological role, plays a role in virus cell tropism, and may be required for efficient virus replication in macrophages. This chain is Protein MGF 360-18R, found in African swine fever virus (isolate Tick/South Africa/Pretoriuskop Pr4/1996) (ASFV).